We begin with the raw amino-acid sequence, 511 residues long: Exodeoxyribonuclease 7 large subunit (511 aa).

The protein belongs to the XseA family. Heterooligomer composed of large and small subunits.

It localises to the cytoplasm. The enzyme catalyses Exonucleolytic cleavage in either 5'- to 3'- or 3'- to 5'-direction to yield nucleoside 5'-phosphates.. Functionally, bidirectionally degrades single-stranded DNA into large acid-insoluble oligonucleotides, which are then degraded further into small acid-soluble oligonucleotides. This Brucella ovis (strain ATCC 25840 / 63/290 / NCTC 10512) protein is Exodeoxyribonuclease 7 large subunit.